The following is a 527-amino-acid chain: 2-isopropylmalate synthase (527 aa).

The Pyruvate carboxyltransferase domain occupies 18 to 280; sequence IRIFDTTLRD…QTNINSKRLV (263 aa). Mn(2+)-binding residues include Asp-27, His-215, His-217, and Asn-251. The interval 405–527 is regulatory domain; that stretch reads TLVDYEVTSG…ASDPGELPQP (123 aa).

This sequence belongs to the alpha-IPM synthase/homocitrate synthase family. LeuA type 1 subfamily. Homodimer. It depends on Mn(2+) as a cofactor.

It localises to the cytoplasm. It carries out the reaction 3-methyl-2-oxobutanoate + acetyl-CoA + H2O = (2S)-2-isopropylmalate + CoA + H(+). It participates in amino-acid biosynthesis; L-leucine biosynthesis; L-leucine from 3-methyl-2-oxobutanoate: step 1/4. Its function is as follows. Catalyzes the condensation of the acetyl group of acetyl-CoA with 3-methyl-2-oxobutanoate (2-ketoisovalerate) to form 3-carboxy-3-hydroxy-4-methylpentanoate (2-isopropylmalate). The protein is 2-isopropylmalate synthase of Rhodopirellula baltica (strain DSM 10527 / NCIMB 13988 / SH1).